The sequence spans 523 residues: Na(+)/H(+) antiporter NhaB (523 aa).

10 helical membrane-spanning segments follow: residues 28–48 (FLII…WLLV), 51–71 (FIFT…GLLA), 89–109 (LSAN…IYFV), 137–157 (MAAF…VISI), 237–257 (FFIR…ATCV), 302–322 (AIIC…VGLI), 347–367 (TESL…AVII), 390–410 (LFYI…VGTV), 445–465 (VATP…LAPL), and 476–496 (MALP…MYLL).

This sequence belongs to the NhaB Na(+)/H(+) (TC 2.A.34) antiporter family.

The protein resides in the cell inner membrane. It catalyses the reaction 2 Na(+)(in) + 3 H(+)(out) = 2 Na(+)(out) + 3 H(+)(in). Na(+)/H(+) antiporter that extrudes sodium in exchange for external protons. The protein is Na(+)/H(+) antiporter NhaB of Tolumonas auensis (strain DSM 9187 / NBRC 110442 / TA 4).